The following is a 419-amino-acid chain: DNA primase DnaG (419 aa).

Residues 174 to 260 (DAIIVVEGRS…EVEDLEKDEV (87 aa)) form the Toprim domain. Residues E180, D222, and D224 each contribute to the Mg(2+) site. Residues 277–314 (HNILSESDSKNSHKKHNGKHNNKHSNNKHQQHETKVKE) form a disordered region. The segment covering 288 to 305 (SHKKHNGKHNNKHSNNKH) has biased composition (basic residues).

It belongs to the archaeal DnaG primase family. As to quaternary structure, forms a ternary complex with MCM helicase and DNA. Component of the archaeal exosome complex. Mg(2+) is required as a cofactor.

It catalyses the reaction ssDNA + n NTP = ssDNA/pppN(pN)n-1 hybrid + (n-1) diphosphate.. In terms of biological role, RNA polymerase that catalyzes the synthesis of short RNA molecules used as primers for DNA polymerase during DNA replication. Also part of the exosome, which is a complex involved in RNA degradation. Acts as a poly(A)-binding protein that enhances the interaction between heteromeric, adenine-rich transcripts and the exosome. This is DNA primase DnaG from Methanobrevibacter smithii (strain ATCC 35061 / DSM 861 / OCM 144 / PS).